Reading from the N-terminus, the 101-residue chain is MILEHVLVLSAYLFLIGLYGLITSRNMVRALMCLELILNAVNMNFVTFSDFFDNSQLKGDIFCIFVIAIAAAEAAIGLAIVSSIYRNRKSTRINQSILLNK.

A run of 3 helical transmembrane segments spans residues 2–22, 32–52, and 61–81; these read ILEH…YGLI, MCLE…SDFF, and IFCI…LAIV.

This sequence belongs to the complex I subunit 4L family. NDH is composed of at least 16 different subunits, 5 of which are encoded in the nucleus.

The protein resides in the plastid. It localises to the chloroplast thylakoid membrane. The enzyme catalyses a plastoquinone + NADH + (n+1) H(+)(in) = a plastoquinol + NAD(+) + n H(+)(out). The catalysed reaction is a plastoquinone + NADPH + (n+1) H(+)(in) = a plastoquinol + NADP(+) + n H(+)(out). Its function is as follows. NDH shuttles electrons from NAD(P)H:plastoquinone, via FMN and iron-sulfur (Fe-S) centers, to quinones in the photosynthetic chain and possibly in a chloroplast respiratory chain. The immediate electron acceptor for the enzyme in this species is believed to be plastoquinone. Couples the redox reaction to proton translocation, and thus conserves the redox energy in a proton gradient. The chain is NAD(P)H-quinone oxidoreductase subunit 4L, chloroplastic from Arabis hirsuta (Hairy rock-cress).